The sequence spans 100 residues: Urease subunit gamma (100 aa).

Belongs to the urease gamma subunit family. As to quaternary structure, heterotrimer of UreA (gamma), UreB (beta) and UreC (alpha) subunits. Three heterotrimers associate to form the active enzyme.

It localises to the cytoplasm. It carries out the reaction urea + 2 H2O + H(+) = hydrogencarbonate + 2 NH4(+). It functions in the pathway nitrogen metabolism; urea degradation; CO(2) and NH(3) from urea (urease route): step 1/1. This chain is Urease subunit gamma, found in Magnetococcus marinus (strain ATCC BAA-1437 / JCM 17883 / MC-1).